A 581-amino-acid chain; its full sequence is Membrane protein insertase YidC (581 aa).

The chain crosses the membrane as a helical span at residues 7–27 (ILIVALAVVSYLMVLQWNEDY). The disordered stretch occupies residues 41–62 (AATPALPDTPADTASTGGDDIP). 5 helical membrane passes run 365–385 (TVDYGFLWFLAQPIFWLLEVI), 388–408 (LLGNWGWSIIVLTIIIKLIFF), 458–478 (LGGCLPILVQMPVFLALYWVL), 489–509 (WMFWITDLSIKDPFFILPIIM), and 536–556 (PIIFTFFFLWFPAGLVLYWVV).

This sequence belongs to the OXA1/ALB3/YidC family. Type 1 subfamily. Interacts with the Sec translocase complex via SecD. Specifically interacts with transmembrane segments of nascent integral membrane proteins during membrane integration.

The protein localises to the cell inner membrane. Its function is as follows. Required for the insertion and/or proper folding and/or complex formation of integral membrane proteins into the membrane. Involved in integration of membrane proteins that insert both dependently and independently of the Sec translocase complex, as well as at least some lipoproteins. Aids folding of multispanning membrane proteins. The sequence is that of Membrane protein insertase YidC from Ectopseudomonas mendocina (strain ymp) (Pseudomonas mendocina).